The primary structure comprises 153 residues: Ribosomal RNA large subunit methyltransferase H (153 aa).

Residues Leu-70, Gly-102, and 121–126 (FSKMTF) contribute to the S-adenosyl-L-methionine site.

It belongs to the RNA methyltransferase RlmH family. In terms of assembly, homodimer.

The protein resides in the cytoplasm. It carries out the reaction pseudouridine(1915) in 23S rRNA + S-adenosyl-L-methionine = N(3)-methylpseudouridine(1915) in 23S rRNA + S-adenosyl-L-homocysteine + H(+). Functionally, specifically methylates the pseudouridine at position 1915 (m3Psi1915) in 23S rRNA. This is Ribosomal RNA large subunit methyltransferase H from Desulfotalea psychrophila (strain LSv54 / DSM 12343).